The following is a 319-amino-acid chain: Acetyl-coenzyme A carboxylase carboxyl transferase subunit alpha (319 aa).

Positions 32 to 293 (NVDTEVRALE…KAVLLNELEA (262 aa)) constitute a CoA carboxyltransferase C-terminal domain.

It belongs to the AccA family. As to quaternary structure, acetyl-CoA carboxylase is a heterohexamer composed of biotin carboxyl carrier protein (AccB), biotin carboxylase (AccC) and two subunits each of ACCase subunit alpha (AccA) and ACCase subunit beta (AccD).

The protein resides in the cytoplasm. The enzyme catalyses N(6)-carboxybiotinyl-L-lysyl-[protein] + acetyl-CoA = N(6)-biotinyl-L-lysyl-[protein] + malonyl-CoA. It participates in lipid metabolism; malonyl-CoA biosynthesis; malonyl-CoA from acetyl-CoA: step 1/1. Functionally, component of the acetyl coenzyme A carboxylase (ACC) complex. First, biotin carboxylase catalyzes the carboxylation of biotin on its carrier protein (BCCP) and then the CO(2) group is transferred by the carboxyltransferase to acetyl-CoA to form malonyl-CoA. The chain is Acetyl-coenzyme A carboxylase carboxyl transferase subunit alpha from Xylella fastidiosa (strain 9a5c).